Consider the following 182-residue polypeptide: Ribosome-recycling factor (182 aa).

It belongs to the RRF family.

It localises to the cytoplasm. Responsible for the release of ribosomes from messenger RNA at the termination of protein biosynthesis. May increase the efficiency of translation by recycling ribosomes from one round of translation to another. The chain is Ribosome-recycling factor from Gloeobacter violaceus (strain ATCC 29082 / PCC 7421).